Consider the following 465-residue polypeptide: Cysteine--tRNA ligase (465 aa).

Position 30 (C30) interacts with Zn(2+). The 'HIGH' region signature appears at 32-42 (ITVYDYCHVGH). Zn(2+) contacts are provided by C214, H239, and E243. The short motif at 271 to 275 (KMSKS) is the 'KMSKS' region element. K274 provides a ligand contact to ATP.

It belongs to the class-I aminoacyl-tRNA synthetase family. In terms of assembly, monomer. The cofactor is Zn(2+).

The protein resides in the cytoplasm. It carries out the reaction tRNA(Cys) + L-cysteine + ATP = L-cysteinyl-tRNA(Cys) + AMP + diphosphate. The sequence is that of Cysteine--tRNA ligase from Burkholderia cenocepacia (strain ATCC BAA-245 / DSM 16553 / LMG 16656 / NCTC 13227 / J2315 / CF5610) (Burkholderia cepacia (strain J2315)).